Consider the following 2177-residue polypeptide: Brefeldin A-inhibited guanine nucleotide-exchange protein 3 (2177 aa).

A compositionally biased stretch (low complexity) spans 282 to 295 (TSSTSTSLESDSAS). The interval 282-301 (TSSTSTSLESDSASPGVSDH) is disordered. Phosphoserine is present on Ser471. The span at 511–524 (TGQTTLEGELGQTT) shows a compositional bias: polar residues. 3 disordered regions span residues 511-542 (TGQT…PAIP), 617-636 (AAEK…DNCS), and 1031-1076 (DGAS…LSTA). The 214-residue stretch at 583–796 (RTRSYGSRYS…EELYHQVLDR (214 aa)) folds into the SEC7 domain. The segment covering 618–627 (AEKDSGRSDV) has biased composition (basic and acidic residues). A phosphoserine mark is found at Ser632 and Ser636. The span at 1032 to 1047 (GASQPPLTISQPQKAT) shows a compositional bias: polar residues. Residue Ser1049 is modified to Phosphoserine. A helical transmembrane segment spans residues 1492–1512 (GPGFGIYAVVHLLLPVMSVWL). 3 disordered regions span residues 1848-1877 (STDS…GKEK), 1946-2004 (ESST…RKKE), and 2033-2064 (KQQH…SPLL). The segment covering 1960-1974 (TPSEDDRSQSREHMG) has biased composition (basic and acidic residues). Ser1991 is modified (phosphoserine). Basic and acidic residues-rich tracts occupy residues 1993-2004 (KVEKKDPSRKKE) and 2043-2052 (KEVKVEKKGE). 5 positions are modified to phosphoserine: Ser2079, Ser2081, Ser2095, Ser2101, and Ser2103. The interval 2082–2103 (AGPELLRQDKRPRSGSTGSSLS) is disordered.

In terms of assembly, interacts with PHB2. In terms of tissue distribution, expressed in breast cancer cell lines. Not expressed in normal tissues such as duct, mammary gland, lung, heart, liver, kidnay, bone marrow.

The protein localises to the cytoplasm. It is found in the cytoplasmic vesicle. It localises to the secretory vesicle. The protein resides in the secretory vesicle membrane. In terms of biological role, participates in the regulation of systemic glucose homeostasis, where it negatively regulates insulin granule biogenesis in pancreatic islet beta cells. Also regulates glucagon granule production in pancreatic alpha cells. Inhibits nuclear translocation of the transcriptional coregulator PHB2 and may enhance estrogen receptor alpha (ESR1) transcriptional activity in breast cancer cells. The polypeptide is Brefeldin A-inhibited guanine nucleotide-exchange protein 3 (Homo sapiens (Human)).